A 120-amino-acid chain; its full sequence is Large ribosomal subunit protein uL18 (120 aa).

The disordered stretch occupies residues 1-22; the sequence is MITKTSKNAARQKRHARVRAKL. The span at 10–20 shows a compositional bias: basic residues; the sequence is ARQKRHARVRA.

The protein belongs to the universal ribosomal protein uL18 family. As to quaternary structure, part of the 50S ribosomal subunit; part of the 5S rRNA/L5/L18/L25 subcomplex. Contacts the 5S and 23S rRNAs.

In terms of biological role, this is one of the proteins that bind and probably mediate the attachment of the 5S RNA into the large ribosomal subunit, where it forms part of the central protuberance. The polypeptide is Large ribosomal subunit protein uL18 (Bacillus velezensis (strain DSM 23117 / BGSC 10A6 / LMG 26770 / FZB42) (Bacillus amyloliquefaciens subsp. plantarum)).